Reading from the N-terminus, the 336-residue chain is Pyridoxal 5'-phosphate synthase subunit PdxS (336 aa).

D-ribose 5-phosphate is bound at residue D30. The active-site Schiff-base intermediate with D-ribose 5-phosphate is the K87. G159 contributes to the D-ribose 5-phosphate binding site. R171 serves as a coordination point for D-glyceraldehyde 3-phosphate. Residues G257 and G278–S279 contribute to the D-ribose 5-phosphate site.

This sequence belongs to the PdxS/SNZ family. As to quaternary structure, in the presence of PdxT, forms a dodecamer of heterodimers.

The catalysed reaction is aldehydo-D-ribose 5-phosphate + D-glyceraldehyde 3-phosphate + L-glutamine = pyridoxal 5'-phosphate + L-glutamate + phosphate + 3 H2O + H(+). It functions in the pathway cofactor biosynthesis; pyridoxal 5'-phosphate biosynthesis. In terms of biological role, catalyzes the formation of pyridoxal 5'-phosphate from ribose 5-phosphate (RBP), glyceraldehyde 3-phosphate (G3P) and ammonia. The ammonia is provided by the PdxT subunit. Can also use ribulose 5-phosphate and dihydroxyacetone phosphate as substrates, resulting from enzyme-catalyzed isomerization of RBP and G3P, respectively. The protein is Pyridoxal 5'-phosphate synthase subunit PdxS of Thermoplasma volcanium (strain ATCC 51530 / DSM 4299 / JCM 9571 / NBRC 15438 / GSS1).